The primary structure comprises 327 residues: Asnovolin J 5',6'-dehydrogenase nvfM (327 aa).

The helical transmembrane segment at 9–29 threads the bilayer; that stretch reads VAIVGASGVTGGSIVNGLLAL. NADP(+) is bound by residues 13–19 and K47; that span reads GASGVTG. K130 functions as the Proton acceptor in the catalytic mechanism.

The protein belongs to the NmrA-type oxidoreductase family.

The protein localises to the membrane. The catalysed reaction is asnovolin K + AH2 = asnovolin A + A. It catalyses the reaction chermesin D methyl ester + AH2 = asnovolin J + A. The protein operates within secondary metabolite biosynthesis; terpenoid biosynthesis. Functionally, asnovolin J 5',6'-dehydrogenase; part of the gene cluster that mediates the biosynthesis of novofumigatonin, a heavily oxygenated meroterpenoid containing a unique orthoester moiety. The first step of the pathway is the synthesis of 3,5-dimethylorsellinic acid (DMOA) by the polyketide synthase nvfA via condensation of one acetyl-CoA starter unit with 3 malonyl-CoA units and 2 methylations. DMOA is then converted to farnesyl-DMOA by the farnesyltransferase nvfB. Epoxydation by FAD-dependent monooxygenase nvfK, followed by a protonation-initiated cyclization catalyzed by the terpene cyclase nvfL leads to the production of asnavolin H. The short chain dehydrogenase nvfC then as a 3-OH dehydrogenase of asnovolin H to yield chemesin D. There are two branches to synthesize asnovolin A from chemesin D. In one branch, chemesin D undergoes Baeyer-Villiger oxidation by nvfH, methylation by nvfJ, and enoyl reduction by the nvfM D enoylreductase that reduces the double bond between C-5'and C-6', to form respectively asnovolin I, asnovolin K, and asnovolin A. In the other branch, the methylation precedes the Baeyer-Villiger oxidation and the enoyl reduction to yield asnovolin A via the asnovolin J intermediate. Asnovolin A is further converted to fumigatonoid A by the Fe(II)/2-oxoglutarate-dependent dioxygenase nvfI that catalyzes an endoperoxidation reaction. The alpha/beta hydrolase nvfD then acts as an epimerase that converts fumigatonoid A to its C-5' epimer, which then undergoes spontaneous or nvfD-catalyzed lactonization. The following step utilizes the ketoreductase nvfG to produce fumigatonoid B. The dioxygenase nvfE further converts fumigatonoid B into fumigatonoid C. Finally the Fe(II)/2-oxoglutarate-dependent dioxygenase nvfF catalyzes two rounds of oxidation to transform fumigatonoid C into the end product, novofumigatonin A. The sequence is that of Asnovolin J 5',6'-dehydrogenase nvfM from Aspergillus novofumigatus (strain IBT 16806).